We begin with the raw amino-acid sequence, 354 residues long: Cytoplasmic tRNA 2-thiolation protein 1 (354 aa).

This sequence belongs to the TtcA family. CTU1/NCS6/ATPBD3 subfamily.

Its subcellular location is the cytoplasm. The protein operates within tRNA modification; 5-methoxycarbonylmethyl-2-thiouridine-tRNA biosynthesis. Its function is as follows. Plays a central role in 2-thiolation of mcm(5)S(2)U at tRNA wobble positions of tRNA(Lys), tRNA(Glu) and tRNA(Gln). Directly binds tRNAs and probably acts by catalyzing adenylation of tRNAs, an intermediate required for 2-thiolation. It is unclear whether it acts as a sulfurtransferase that transfers sulfur from thiocarboxylated URM1 onto the uridine of tRNAs at wobble position. Prior mcm(5) tRNA modification by the elongator complex is required for 2-thiolation. May also be involved in protein urmylation. The chain is Cytoplasmic tRNA 2-thiolation protein 1 from Laccaria bicolor (strain S238N-H82 / ATCC MYA-4686) (Bicoloured deceiver).